Here is a 320-residue protein sequence, read N- to C-terminus: Putative cyclin-D7-1 (320 aa).

The segment at M1–D46 is disordered. Pro residues predominate over residues S24–E34. The segment covering Q35 to P44 has biased composition (low complexity).

Belongs to the cyclin family. Cyclin D subfamily.

This chain is Putative cyclin-D7-1 (CYCD7-1), found in Oryza sativa subsp. japonica (Rice).